The chain runs to 1773 residues: MEHTASLPGYVREKLAELDLELSEGDITQKGYEKKRAKLLQPFLKKPEGDKVKSTPPPPYYNVKNANNSTNHGNINNDGVIVSSEGYSYVTEVPSLSSSQQRHSKKIDFHQQAAMSLSSAPQSGNAGAPGYENMRPQGGAVGDPGYQNTREPSAFQNQQSTNNSQHRQRRTQRKVTHNEKRYHSEVRQEAVQQALAALKGRPKPSLPMPSKRTSVLNRSPGCNDELDSSTDDESIPEETISPDKEYNYPRDHISNSILPPEPIIKPPIRESSMGSQQHARTDVKQNQITNQKYTAPNSAPERRPPQNLPPLPTSEPLSSDYPPIAYKRENDFSDKAFKQKQYNAPDITQFNNAHRAADRVTRYVNVSQNELNETDANGKWKVSAKIQQLLNTLKRPKRRPLPEFYEDNDIELEIAANTKDPNAPKPEGSTMTPVQGEQLSIPAGLPRTLECALQRYGTNSFKSPMATVLDPNGKVTTTLTYGKLLSRAQKIAHALSTKIFSKGPEQVTLKPGDRVALVYPNNDPLSFITAWYGCMFRGLVPLPIELPLSSSDTPPQQVGFLLSSCGITVALTSEACLKGLPKSTTTGEIAKLKGWPRLQWFVTEHLPKPPKEFNVGNLRADDSAAAYIEYTTDKEGSVMGVTVTRAAMINHCRALTMACHYTEGETIVCVLDFKREVGLWHSVLTSVLNGMHVIFIPYALMKLRPSSWMQLITKHRASCCLVKSRDLHWGLLATKDHKDISLSSLRMLLVADGANPWSLSSCDQFLSVFQAKGLRSDAICPCASSSEVFTVSLRRPGRGSCGFSPSATGRGVLSMAALSHGVVRVDSEDSLTSLTLQDCGQVMPAAQMVVVRSEGPPVLCKTDQVGEICVTSGSTSASYFGLDGMTNSTFKVQPLLEELEQPKDGNGTVNIISKPIGEDFYVRSGLLGFLGPGGLVFVCGSRDGLMTVTGRKHNADDIIATVLAVEPMRFIYRGRIAVFSIKVLRDERVCVIAEQRPDCSEEESFQWMSRVLQAVDSIHQVGIYCLALVPPNHLPKTPLGGIHLCEARRRFLEGSLHPANVLMCPHTCVTNLPKPRELHQGVQTAAKLSSSSGCGITDTGVGPASVMVGNLVQGNRLAEAHGRDVGLAEDCERKPQLITGVLRWRANTSPDHIIFTLLNSKGAIAKTLTCSELHKRAEKIAALLQERGRIEPGDHVALIFPPGLDLLCAFYGCLYLGAIPITIRPPHPQNLNTTLPTVRMIVDVSKSGIVLSIQPIIKLLKSREAATSIDPKTWPPILDIDDNPKRKYAGIATVSFDSSAYLDFSVSTCGRLSGVNITHRSLSSLCASLKLACELYPSRHVALCLDPYCGLGFVMWTLIGVYSGHHSILIAPYEVEANPSLWLSTLSQHRVRDTFCSYGVIELCTKALSNSIPSLKQRNIDLRCVRTCVVVAEERPRVQLTQQFCKLFQALGLNTRCVSTSFGCRVNPAICVQGASSAESAQVYVDMRALRNNRVALVERGAPNSLCVIESGKLLPGVKVIIANPETKGHCGDSHLGEIWVQAPHNANGYFTIYGDETDYNDHFNAKLVTGATSELYARTGYLGFLRRTECSQSASLLDETTPSVASRDSDTESLNSISQLQLNFSNVSLGGNSEHSLVGGASNANDQELHDAVYVVGAVDEVISLRGMNYHPIDIENSVMRCHKKIAECAVFTWTNLLVVVVELDGNESEALDLVPLVTNTVLEDHQLIVGVVVVVDPGVVPINSRGEKQRMHLRDGFLADQLDPIYVAYNM.

The DMAP1-binding domain occupies 3–110 (HTASLPGYVR…QRHSKKIDFH (108 aa)). Phosphotyrosine is present on residues Y60 and Y61. Disordered regions lie at residues 112–185 (QAAM…YHSE) and 198–319 (LKGR…PLSS). Polar residues-rich tracts occupy residues 113-125 (AAMS…QSGN) and 146-165 (YQNT…NNSQ). Residues 166–175 (HRQRRTQRKV) show a composition bias toward basic residues. Over residues 176–185 (THNEKRYHSE) the composition is skewed to basic and acidic residues. The span at 224-236 (DELDSSTDDESIP) shows a compositional bias: acidic residues. Residues 241–253 (SPDKEYNYPRDHI) are compositionally biased toward basic and acidic residues. Positions 272 to 297 (SMGSQQHARTDVKQNQITNQKYTAPN) are enriched in polar residues.

This sequence belongs to the DIP2 family. Interacts with Disco. Expressed in the developing nervous system. Ubiquitously expressed in the developing brain. Within the mushroom body, a higher level is detected in the core of lobes and peduncle in the late third instar larva. Detected in whole mushroom body neuron structures at 48 hours after puparium formation and during later stages.

It is found in the cell membrane. Its function is as follows. Required for precise axonal bifurcation in mushroom body neurons by suppressing ectopic bifurcation and regulating the guidance of sister axons. May function by regulating expression of tdp1. Acts downstream of the serine/threonine-protein kinase Bsk to modulate the direction of axon projection. May play a role in fatty acid metabolism. This Drosophila melanogaster (Fruit fly) protein is Disco-interacting protein 2.